We begin with the raw amino-acid sequence, 188 residues long: Ribosome-recycling factor (188 aa).

This sequence belongs to the RRF family.

The protein localises to the cytoplasm. Functionally, responsible for the release of ribosomes from messenger RNA at the termination of protein biosynthesis. May increase the efficiency of translation by recycling ribosomes from one round of translation to another. This chain is Ribosome-recycling factor, found in Caulobacter vibrioides (strain NA1000 / CB15N) (Caulobacter crescentus).